Consider the following 213-residue polypeptide: ATP-dependent dethiobiotin synthetase BioD (213 aa).

Position 12–17 (asparagine 12–phenylalanine 17) interacts with ATP. Threonine 16 contributes to the Mg(2+) binding site. Lysine 36 is an active-site residue. Position 40 (serine 40) interacts with substrate. ATP-binding positions include aspartate 53, glutamate 110–glycine 113, and asparagine 170–glutamine 171. Residues aspartate 53 and glutamate 110 each contribute to the Mg(2+) site.

It belongs to the dethiobiotin synthetase family. As to quaternary structure, homodimer. Mg(2+) is required as a cofactor.

The protein resides in the cytoplasm. It catalyses the reaction (7R,8S)-7,8-diammoniononanoate + CO2 + ATP = (4R,5S)-dethiobiotin + ADP + phosphate + 3 H(+). It participates in cofactor biosynthesis; biotin biosynthesis; biotin from 7,8-diaminononanoate: step 1/2. Functionally, catalyzes a mechanistically unusual reaction, the ATP-dependent insertion of CO2 between the N7 and N8 nitrogen atoms of 7,8-diaminopelargonic acid (DAPA, also called 7,8-diammoniononanoate) to form a ureido ring. The polypeptide is ATP-dependent dethiobiotin synthetase BioD (Ruthia magnifica subsp. Calyptogena magnifica).